The primary structure comprises 216 residues: Phosphatidylserine decarboxylase proenzyme (216 aa).

Serine 183 (schiff-base intermediate with substrate; via pyruvic acid) is an active-site residue. Serine 183 carries the post-translational modification Pyruvic acid (Ser); by autocatalysis.

Belongs to the phosphatidylserine decarboxylase family. PSD-A subfamily. In terms of assembly, heterodimer of a large membrane-associated beta subunit and a small pyruvoyl-containing alpha subunit. Pyruvate is required as a cofactor. Is synthesized initially as an inactive proenzyme. Formation of the active enzyme involves a self-maturation process in which the active site pyruvoyl group is generated from an internal serine residue via an autocatalytic post-translational modification. Two non-identical subunits are generated from the proenzyme in this reaction, and the pyruvate is formed at the N-terminus of the alpha chain, which is derived from the carboxyl end of the proenzyme. The post-translation cleavage follows an unusual pathway, termed non-hydrolytic serinolysis, in which the side chain hydroxyl group of the serine supplies its oxygen atom to form the C-terminus of the beta chain, while the remainder of the serine residue undergoes an oxidative deamination to produce ammonia and the pyruvoyl prosthetic group on the alpha chain.

It localises to the cell membrane. It catalyses the reaction a 1,2-diacyl-sn-glycero-3-phospho-L-serine + H(+) = a 1,2-diacyl-sn-glycero-3-phosphoethanolamine + CO2. Its pathway is phospholipid metabolism; phosphatidylethanolamine biosynthesis; phosphatidylethanolamine from CDP-diacylglycerol: step 2/2. In terms of biological role, catalyzes the formation of phosphatidylethanolamine (PtdEtn) from phosphatidylserine (PtdSer). The polypeptide is Phosphatidylserine decarboxylase proenzyme (Cupriavidus taiwanensis (strain DSM 17343 / BCRC 17206 / CCUG 44338 / CIP 107171 / LMG 19424 / R1) (Ralstonia taiwanensis (strain LMG 19424))).